The sequence spans 273 residues: Urease accessory protein UreD (273 aa).

The protein belongs to the UreD family. As to quaternary structure, ureD, UreF and UreG form a complex that acts as a GTP-hydrolysis-dependent molecular chaperone, activating the urease apoprotein by helping to assemble the nickel containing metallocenter of UreC. The UreE protein probably delivers the nickel.

Its subcellular location is the cytoplasm. Functionally, required for maturation of urease via the functional incorporation of the urease nickel metallocenter. The chain is Urease accessory protein UreD from Rhizobium leguminosarum bv. viciae.